Consider the following 131-residue polypeptide: Small ribosomal subunit protein uS8 (131 aa).

Belongs to the universal ribosomal protein uS8 family. Part of the 30S ribosomal subunit. Contacts proteins S5 and S12.

Functionally, one of the primary rRNA binding proteins, it binds directly to 16S rRNA central domain where it helps coordinate assembly of the platform of the 30S subunit. In Thiobacillus denitrificans (strain ATCC 25259 / T1), this protein is Small ribosomal subunit protein uS8.